The chain runs to 277 residues: NLP effector protein Pc109174 (277 aa).

Positions 1 to 19 are cleaved as a signal peptide; that stretch reads MNLVPALVLLLALAQTVLG. The Hepta-peptide GHRHDWE motif motif lies at 119-125; it reads KSRHLWA. Asn-199 carries N-linked (GlcNAc...) asparagine glycosylation.

This sequence belongs to the Necrosis inducing protein (NPP1) family.

The protein resides in the secreted. In terms of biological role, secreted effector that contributes strongly to virulence during infection by P.capsici. Induces cell death in the Solanaceae, including hot pepper. This is NLP effector protein Pc109174 from Phytophthora capsici.